The following is a 166-amino-acid chain: Phosphopantetheine adenylyltransferase (166 aa).

A substrate-binding site is contributed by threonine 11. ATP-binding positions include 11–12 and histidine 19; that span reads TF. Positions 43, 79, and 93 each coordinate substrate. Residues glutamate 104 and 128–134 contribute to the ATP site; that span reads LEPLNST.

It belongs to the bacterial CoaD family. As to quaternary structure, homohexamer. Requires Mg(2+) as cofactor.

It is found in the cytoplasm. The catalysed reaction is (R)-4'-phosphopantetheine + ATP + H(+) = 3'-dephospho-CoA + diphosphate. It functions in the pathway cofactor biosynthesis; coenzyme A biosynthesis; CoA from (R)-pantothenate: step 4/5. In terms of biological role, reversibly transfers an adenylyl group from ATP to 4'-phosphopantetheine, yielding dephospho-CoA (dPCoA) and pyrophosphate. In Lactococcus lactis subsp. cremoris (strain MG1363), this protein is Phosphopantetheine adenylyltransferase.